A 74-amino-acid chain; its full sequence is Peptide Im-4 (74 aa).

Positions 1-22 (MKFQYLLAIFMIVLVVTDHCQA) are cleaved as a signal peptide. Lysine 39 carries the post-translational modification Lysine amide; partial. Residues 40 to 74 (GRRRRQLEARYEPQQRNFRKREIDFEKLFANMPDY) constitute a propeptide that is removed on maturation.

It belongs to the non-disulfide-bridged peptide (NDBP) superfamily. Short antimicrobial peptide (group 4) family. Expressed by the venom gland.

The protein localises to the secreted. The protein resides in the target cell membrane. Functionally, antimicrobial peptide that probably forms pores in target membranes. Has antibacterial activity against Gram-positive bacteria S.aureus NBRC 13276 (MIC=5-10 uM) and B.subtilis NBRC 3009 (MIC=2.5-5 uM) but not against Gram-negative bacterium E.coli NBRC 3972. The polypeptide is Peptide Im-4 (Isometrus maculatus (Lesser brown scorpion)).